Consider the following 103-residue polypeptide: Pyrimidine/purine nucleoside phosphorylase (103 aa).

It belongs to the nucleoside phosphorylase PpnP family.

It catalyses the reaction a purine D-ribonucleoside + phosphate = a purine nucleobase + alpha-D-ribose 1-phosphate. The catalysed reaction is adenosine + phosphate = alpha-D-ribose 1-phosphate + adenine. It carries out the reaction cytidine + phosphate = cytosine + alpha-D-ribose 1-phosphate. The enzyme catalyses guanosine + phosphate = alpha-D-ribose 1-phosphate + guanine. It catalyses the reaction inosine + phosphate = alpha-D-ribose 1-phosphate + hypoxanthine. The catalysed reaction is thymidine + phosphate = 2-deoxy-alpha-D-ribose 1-phosphate + thymine. It carries out the reaction uridine + phosphate = alpha-D-ribose 1-phosphate + uracil. The enzyme catalyses xanthosine + phosphate = alpha-D-ribose 1-phosphate + xanthine. Functionally, catalyzes the phosphorolysis of diverse nucleosides, yielding D-ribose 1-phosphate and the respective free bases. Can use uridine, adenosine, guanosine, cytidine, thymidine, inosine and xanthosine as substrates. Also catalyzes the reverse reactions. In Chlorobium chlorochromatii (strain CaD3), this protein is Pyrimidine/purine nucleoside phosphorylase.